A 105-amino-acid polypeptide reads, in one-letter code: MSKLRKGDTVIVIAGKDKGKQGTVQAVKNDRIKVEGINIVTKHQKPNQATGVEGGILKQEAFLHISNVAILNAQTQKADRITYQFGEDGKKQRLYRSNGEVVATA.

It belongs to the universal ribosomal protein uL24 family. In terms of assembly, part of the 50S ribosomal subunit.

In terms of biological role, one of two assembly initiator proteins, it binds directly to the 5'-end of the 23S rRNA, where it nucleates assembly of the 50S subunit. One of the proteins that surrounds the polypeptide exit tunnel on the outside of the subunit. This chain is Large ribosomal subunit protein uL24, found in Psychrobacter cryohalolentis (strain ATCC BAA-1226 / DSM 17306 / VKM B-2378 / K5).